The primary structure comprises 191 residues: MSHAEDNAGTRRDFLYHATAATGVVVTGAAVWPLINQMNASADVKAMASIFVDVSAVEVGTQLTVKWRGKPVFIRRRDEKDIELARSVPLGALRDTSAENANKPGAEATDENRTLPAFDGTNTGEWLVMLGVCTHLGCVPMGDKSGDFGGWFCPCHGSHYDSAGRIRKGPAPRNLDIPVAAFVDETTIKLG.

The chain crosses the membrane as a helical span at residues 18-35 (ATAATGVVVTGAAVWPLI). One can recognise a Rieske domain in the interval 94 to 189 (RDTSAENANK…AAFVDETTIK (96 aa)). Residues 95-116 (DTSAENANKPGAEATDENRTLP) form a disordered region. [2Fe-2S] cluster contacts are provided by Cys133, His135, Cys153, and His156. Cys138 and Cys155 are oxidised to a cystine.

Belongs to the Rieske iron-sulfur protein family. In terms of assembly, the main subunits of complex b-c1 are: cytochrome b, cytochrome c1 and the Rieske protein. [2Fe-2S] cluster serves as cofactor.

Its subcellular location is the cell membrane. It catalyses the reaction a quinol + 2 Fe(III)-[cytochrome c](out) = a quinone + 2 Fe(II)-[cytochrome c](out) + 2 H(+)(out). In terms of biological role, component of the ubiquinol-cytochrome c reductase complex (complex III or cytochrome b-c1 complex), which is a respiratory chain that generates an electrochemical potential coupled to ATP synthesis. The chain is Ubiquinol-cytochrome c reductase iron-sulfur subunit (petA) from Rhodobacter capsulatus (strain ATCC BAA-309 / NBRC 16581 / SB1003).